Here is a 1021-residue protein sequence, read N- to C-terminus: MARGFTVGFDPLGLGELSSGSLSSVSSRGHLGSDSGSTATRYLLRKQQRLLNGPSRGIRASSPMGRVILINSPIEANSDESDIIHAVRVEKSPSGRLGFSVRGGSEHGLGIFVSKVEEGSSAERAGLCVGDKITEVNGLSLESTTMGSAVRLLTSSSCLHMMVRRMGRVPGIKFSKEKTTWVDVVNRRLVVEKCSSTPSDRSSEDGVRRIVHLYTTSDDFCLGFNIRGGKEFGLGIYVSKVDHGGLAEENGIKVGDQVLAANGVRFDDISHSQAVEVLKGQTHIMLTIKETGRYPAYKEMVSEYCWLDRLSNGVLQQLSPASESSSSVSSYASSAPCSSGSLPSDRMDVCLGPEEPTSHGPGWGRADTAMQTEPDLDSRVETWCSVRPTVILRDTAIRSDGPSSTRHLDSALSESPKTALLLALSRPRTPITRSQSHLTLWEEKKQRKKEKSGSSGEKGALQRSKTLMNLFFKGGRQGRPAGDGHREAWTLDSRSPTKVRPRLDLEKAGSVGPVQKFVTWRLRRDRERGRALLSARSGSPSGQAPTVNEQVQAWESRRPLIQDLARRLLTDDEVLAVTRHCSRYVHEGGVEDLVRPLLAILDRPTKLLLLRDIRSVVAPTDLGRFDSMVMPVELEAFEALKSRAVGPSALRPTRQDTPPKRHLITPVPDSRGGFYLLPVNSSEDEDGEIREKLGVLKVSLGASAPHHKGIPPLQDVPVDAFSLRRGACAPPPQPPPVAPRPPRPNWLLTEPLSREDTQQNQSQTPAQSCSRSRSRSRSRSHSRGQGKSPGRRRSPSPAPIATAATANGRYHRPRKARPLLPRLLDGQVAKVGARQGPLENGRIAEEAVGNVSTGALRTITLSKMKQSLGISISGGIESKVQPMVKIEKIFPGGAAFLCGDLQAGFELVAVDGESLEQVTHQRAVDTIRRAYRNKAREPMELVVRVPGPGLLPLASDLRVVKDQSLAPDCPSALGPVDDARILTQLPPPEARQLQQSLSSALKVPQSIPKLSPILKDPHDPS.

2 consecutive PDZ domains span residues 86–156 and 210–279; these read AVRV…LTSS and IVHL…EVLK. The segment covering 324-344 has biased composition (low complexity); sequence SSSSVSSYASSAPCSSGSLPS. Disordered stretches follow at residues 324–345, 431–495, and 724–814; these read SSSS…LPSD, ITRS…DSRS, and RRGA…HRPR. Residues 729–744 show a composition bias toward pro residues; that stretch reads APPPQPPPVAPRPPRP. Residues 758–767 show a composition bias toward polar residues; that stretch reads QQNQSQTPAQ. The span at 772–794 shows a compositional bias: basic residues; the sequence is SRSRSRSRSHSRGQGKSPGRRRS. Positions 799–808 are enriched in low complexity; sequence PIATAATANG. The 73-residue stretch at 858 to 930 folds into the PDZ 3 domain; sequence TITLSKMKQS…QRAVDTIRRA (73 aa). The disordered stretch occupies residues 992-1021; the sequence is QLQQSLSSALKVPQSIPKLSPILKDPHDPS.

Homodimerizes (via PDZ2 domain). Component of USH2 complex, composed of ADGRV1, PDZD7, USH2A and WHRN. Interacts (via PDZ domains) with WHRN; the interaction is direct. Interacts with USH1G. Interacts with ADGRV1 (via the cytoplasmic region). Interacts with USH2A (via the cytoplasmic region). Interacts with MYO7A (via MyTH4-FERM domains). As to expression, isoform 1 is expressed in developing and adult cochlea but not retina. Isoform 2 is expressed in developing and adult cochlea and retina. Isoform 3 is expressed in adult cochlea and retina. Isoform 4 is expressed in retina and developing cochlea but not adult cochlea. Isoform 5 is expressed in adult cochlea but not in developing cochlea or retina.

The protein localises to the cell projection. It is found in the cilium. The protein resides in the nucleus. Its subcellular location is the stereocilium. Functionally, in cochlear developing hair cells, essential in organizing the USH2 complex at stereocilia ankle links. Blocks inhibition of adenylate cyclase activity mediated by ADGRV1. The protein is PDZ domain-containing protein 7 of Mus musculus (Mouse).